Here is a 1068-residue protein sequence, read N- to C-terminus: Carbamoyl phosphate synthase large chain (1068 aa).

Positions 1–401 (MPLNKDIKKV…AFLKGTRSLE (401 aa)) are carboxyphosphate synthetic domain. Residues Arg-129, Arg-169, Gly-175, Gly-176, Lys-208, Val-210, Glu-215, Gly-241, Ile-242, His-243, Gln-284, and Glu-298 each coordinate ATP. Residues 133–327 (RNVMSRINEP…IAKVASKIAL (195 aa)) enclose the ATP-grasp 1 domain. 3 residues coordinate Mg(2+): Gln-284, Glu-298, and Asn-300. The Mn(2+) site is built by Gln-284, Glu-298, and Asn-300. The tract at residues 402–549 (IGKYSLEHKK…YSTYDVYDEV (148 aa)) is oligomerization domain. The segment at 550–932 (EVSKNKKVIV…ALYKGFIGAN (383 aa)) is carbamoyl phosphate synthetic domain. In terms of domain architecture, ATP-grasp 2 spans 674–864 (DELLEKLKIA…IVDIATRVML (191 aa)). 10 residues coordinate ATP: Arg-710, Lys-749, Leu-751, Glu-755, Gly-780, Val-781, His-782, Ser-783, Gln-823, and Glu-835. Mg(2+) contacts are provided by Gln-823, Glu-835, and Asn-837. Positions 823, 835, and 837 each coordinate Mn(2+). The MGS-like domain occupies 933 to 1068 (ISIKKEKGTV…ETLYIFDLSN (136 aa)). The allosteric domain stretch occupies residues 933 to 1068 (ISIKKEKGTV…ETLYIFDLSN (136 aa)).

Belongs to the CarB family. As to quaternary structure, composed of two chains; the small (or glutamine) chain promotes the hydrolysis of glutamine to ammonia, which is used by the large (or ammonia) chain to synthesize carbamoyl phosphate. Tetramer of heterodimers (alpha,beta)4. It depends on Mg(2+) as a cofactor. Mn(2+) is required as a cofactor.

The enzyme catalyses hydrogencarbonate + L-glutamine + 2 ATP + H2O = carbamoyl phosphate + L-glutamate + 2 ADP + phosphate + 2 H(+). The catalysed reaction is hydrogencarbonate + NH4(+) + 2 ATP = carbamoyl phosphate + 2 ADP + phosphate + 2 H(+). It functions in the pathway amino-acid biosynthesis; L-arginine biosynthesis; carbamoyl phosphate from bicarbonate: step 1/1. The protein operates within pyrimidine metabolism; UMP biosynthesis via de novo pathway; (S)-dihydroorotate from bicarbonate: step 1/3. Its function is as follows. Large subunit of the glutamine-dependent carbamoyl phosphate synthetase (CPSase). CPSase catalyzes the formation of carbamoyl phosphate from the ammonia moiety of glutamine, carbonate, and phosphate donated by ATP, constituting the first step of 2 biosynthetic pathways, one leading to arginine and/or urea and the other to pyrimidine nucleotides. The large subunit (synthetase) binds the substrates ammonia (free or transferred from glutamine from the small subunit), hydrogencarbonate and ATP and carries out an ATP-coupled ligase reaction, activating hydrogencarbonate by forming carboxy phosphate which reacts with ammonia to form carbamoyl phosphate. This is Carbamoyl phosphate synthase large chain from Clostridium botulinum (strain Langeland / NCTC 10281 / Type F).